The following is a 145-amino-acid chain: Large ribosomal subunit protein bL17 (145 aa).

Residues 123-145 (KRVDRKKKDPAKDKTEEKKLATA) are disordered.

Belongs to the bacterial ribosomal protein bL17 family. In terms of assembly, part of the 50S ribosomal subunit. Contacts protein L32.

The protein is Large ribosomal subunit protein bL17 of Pelagibacter ubique (strain HTCC1062).